The primary structure comprises 268 residues: Large ribosomal subunit protein uL3 (268 aa).

Glutamine 156 is modified (N5-methylglutamine). The span at 242 to 259 (VENEAAPADADNAAPEAA) shows a compositional bias: low complexity. Residues 242–268 (VENEAAPADADNAAPEAAADGEEGTQA) are disordered.

This sequence belongs to the universal ribosomal protein uL3 family. Part of the 50S ribosomal subunit. Forms a cluster with proteins L14 and L19. Post-translationally, methylated by PrmB.

Its function is as follows. One of the primary rRNA binding proteins, it binds directly near the 3'-end of the 23S rRNA, where it nucleates assembly of the 50S subunit. The chain is Large ribosomal subunit protein uL3 from Maricaulis maris (strain MCS10) (Caulobacter maris).